Reading from the N-terminus, the 237-residue chain is Large ribosomal subunit protein uL1 (237 aa).

It belongs to the universal ribosomal protein uL1 family. In terms of assembly, part of the 50S ribosomal subunit.

Binds directly to 23S rRNA. The L1 stalk is quite mobile in the ribosome, and is involved in E site tRNA release. Its function is as follows. Protein L1 is also a translational repressor protein, it controls the translation of the L11 operon by binding to its mRNA. The protein is Large ribosomal subunit protein uL1 of Corynebacterium kroppenstedtii (strain DSM 44385 / JCM 11950 / CIP 105744 / CCUG 35717).